Here is a 290-residue protein sequence, read N- to C-terminus: 7-methylguanosine phosphate-specific 5'-nucleotidase B (290 aa).

Catalysis depends on D39, which acts as the Nucleophile. Positions 39 and 41 each coordinate Mg(2+). D41 (proton donor) is an active-site residue. E86 serves as a coordination point for CMP. E86 contacts N(7)-methyl-GMP. Substrate-binding positions include 154-155 (SA) and K203. Position 228 (D228) interacts with Mg(2+).

It belongs to the pyrimidine 5'-nucleotidase family. As to quaternary structure, monomer.

It localises to the cytoplasm. The catalysed reaction is N(7)-methyl-GMP + H2O = N(7)-methylguanosine + phosphate. It catalyses the reaction CMP + H2O = cytidine + phosphate. It carries out the reaction a ribonucleoside 5'-phosphate + H2O = a ribonucleoside + phosphate. In terms of biological role, specifically hydrolyzes 7-methylguanosine monophosphate (m(7)GMP) to 7-methylguanosine and inorganic phosphate. The specific activity for m(7)GMP may protect cells against undesired salvage of m(7)GMP and its incorporation into nucleic acids. Also has weak activity for CMP. UMP and purine nucleotides are poor substrates. The protein is 7-methylguanosine phosphate-specific 5'-nucleotidase B (Nt5c3b-b) of Xenopus laevis (African clawed frog).